The primary structure comprises 102 residues: Citrate lyase acyl carrier protein (102 aa).

An O-(phosphoribosyl dephospho-coenzyme A)serine modification is found at S14.

It belongs to the CitD family. Oligomer with a subunit composition of (alpha,beta,gamma)6.

The protein resides in the cytoplasm. Covalent carrier of the coenzyme of citrate lyase. The protein is Citrate lyase acyl carrier protein of Streptococcus pyogenes serotype M2 (strain MGAS10270).